The sequence spans 109 residues: Large ribosomal subunit protein eL30 (109 aa).

This sequence belongs to the eukaryotic ribosomal protein eL30 family.

The sequence is that of Large ribosomal subunit protein eL30 from Methanopyrus kandleri (strain AV19 / DSM 6324 / JCM 9639 / NBRC 100938).